Reading from the N-terminus, the 524-residue chain is M phase phosphoprotein 10 (524 aa).

The Nuclear localization signal 1 motif lies at Val85–Pro92. 2 disordered regions span residues Lys100–Lys243 and Lys259–Glu283. Over residues Asp109 to Gly168 the composition is skewed to acidic residues. Residues Ile131–Asp165 are a coiled coil. The span at Ile169 to Glu180 shows a compositional bias: basic and acidic residues. Acidic residues predominate over residues Glu181–Tyr191. A compositionally biased stretch (basic residues) spans Lys196–Gln207. The span at Ser210–Thr238 shows a compositional bias: acidic residues. A coiled-coil region spans residues Lys257 to Asp302. Basic and acidic residues predominate over residues Ile271 to Glu283. The Nuclear localization signal 2 motif lies at Gly373–Leu380. The segment at Lys479–Pro524 is disordered. Residues Gly480–Arg493 are compositionally biased toward basic and acidic residues. Over residues Lys494–Phe504 the composition is skewed to basic residues. Over residues Lys505–Leu517 the composition is skewed to basic and acidic residues.

It belongs to the MPP10 family. In terms of assembly, component of the ribosomal small subunit (SSU) processome. Interacts with THAL in the nucleus.

It localises to the nucleus. It is found in the nucleolus. Involved in nucleolar processing of pre-18S ribosomal RNA. The polypeptide is M phase phosphoprotein 10 (Arabidopsis thaliana (Mouse-ear cress)).